We begin with the raw amino-acid sequence, 714 residues long: Polyribonucleotide nucleotidyltransferase (714 aa).

Mg(2+) is bound by residues Asp-487 and Asp-493. The 60-residue stretch at Pro-554–Ile-613 folds into the KH domain. An S1 motif domain is found at Gly-623–Arg-691.

It belongs to the polyribonucleotide nucleotidyltransferase family. Mg(2+) serves as cofactor.

The protein localises to the cytoplasm. It carries out the reaction RNA(n+1) + phosphate = RNA(n) + a ribonucleoside 5'-diphosphate. In terms of biological role, involved in mRNA degradation. Catalyzes the phosphorolysis of single-stranded polyribonucleotides processively in the 3'- to 5'-direction. The protein is Polyribonucleotide nucleotidyltransferase of Methylocella silvestris (strain DSM 15510 / CIP 108128 / LMG 27833 / NCIMB 13906 / BL2).